A 360-amino-acid polypeptide reads, in one-letter code: Mitogen-activated protein kinase 14 (360 aa).

Residue Ser2 is modified to N-acetylserine. Phosphoserine is present on Ser2. The residue at position 16 (Thr16) is a Phosphothreonine. The 285-residue stretch at Tyr24–Phe308 folds into the Protein kinase domain. ATP is bound by residues Val30–Val38 and Lys53. An N6-acetyllysine modification is found at Lys53. The active-site Proton acceptor is Asp150. Lys152 bears the N6-acetyllysine mark. Position 180 is a phosphothreonine; by MAP2K3, MAP2K4, MAP2K6 and autocatalysis (Thr180). Tyr182 is modified (phosphotyrosine; by MAP2K3, MAP2K4, MAP2K6 and autocatalysis). A Phosphothreonine modification is found at Thr263. A Phosphotyrosine; by ZAP70 modification is found at Tyr323.

It belongs to the protein kinase superfamily. CMGC Ser/Thr protein kinase family. MAP kinase subfamily. Component of a signaling complex containing at least AKAP13, PKN1, MAPK14, ZAK and MAP2K3. Within this complex, AKAP13 interacts directly with PKN1, which in turn recruits MAPK14, MAP2K3 and ZAK. Binds to a kinase interaction motif within the protein tyrosine phosphatase, PTPRR. This interaction retains MAPK14 in the cytoplasm and prevents nuclear accumulation. Interacts with SPAG9 and GADD45A. Interacts with CDC25B, CDC25C, DUSP1, DUSP10, DUSP16, NP60, SUPT20H and TAB1. Interacts with casein kinase II subunits CSNK2A1 and CSNK2B. Interacts with PPM1D. Interacts with CDK5RAP3; recruits PPM1D to MAPK14 and may regulate its dephosphorylation. Interacts with DUSP2; this interaction does not lead to catalytic activation of DUSP2 and dephosphrylation of MAPK14. Mg(2+) serves as cofactor. Dually phosphorylated on Thr-180 and Tyr-182 by the MAP2Ks MAP2K3/MKK3, MAP2K4/MKK4 and MAP2K6/MKK6 in response to inflammatory cytokines, environmental stress or growth factors, which activates the enzyme. Dual phosphorylation can also be mediated by TAB1-mediated autophosphorylation. TCR engagement in T-cells also leads to Tyr-323 phosphorylation by ZAP70. Dephosphorylated and inactivated by DUPS1, DUSP10 and DUSP16. PPM1D also mediates dephosphorylation and inactivation of MAPK14. In terms of processing, acetylated at Lys-53 and Lys-152 by KAT2B and EP300. Acetylation at Lys-53 increases the affinity for ATP and enhances kinase activity. Lys-53 and Lys-152 are deacetylated by HDAC3. Post-translationally, ubiquitinated. Ubiquitination leads to degradation by the proteasome pathway.

The protein localises to the cytoplasm. It localises to the nucleus. The enzyme catalyses L-seryl-[protein] + ATP = O-phospho-L-seryl-[protein] + ADP + H(+). The catalysed reaction is L-threonyl-[protein] + ATP = O-phospho-L-threonyl-[protein] + ADP + H(+). With respect to regulation, activated by cell stresses such as DNA damage, heat shock, osmotic shock, anisomycin and sodium arsenite, as well as pro-inflammatory stimuli such as bacterial lipopolysaccharide (LPS) and interleukin-1. Activation occurs through dual phosphorylation of Thr-180 and Tyr-182 by either of two dual specificity kinases, MAP2K3/MKK3 or MAP2K6/MKK6, and potentially also MAP2K4/MKK4, as well as by TAB1-mediated autophosphorylation. MAPK14 phosphorylated on both Thr-180 and Tyr-182 is 10-20-fold more active than MAPK14 phosphorylated only on Thr-180, whereas MAPK14 phosphorylated on Tyr-182 alone is inactive. whereas Thr-180 is necessary for catalysis, Tyr-182 may be required for auto-activation and substrate recognition. Phosphorylated at Tyr-323 by ZAP70 in an alternative activation pathway in response to TCR signaling in T-cells. This alternative pathway is inhibited by GADD45A. Inhibited by dual specificity phosphatases, such as DUSP1, DUSP10, and DUSP16. Specifically inhibited by the binding of pyridinyl-imidazole compounds, which are cytokine-suppressive anti-inflammatory drugs (CSAID). SB203580 is an inhibitor of MAPK14. Its function is as follows. Serine/threonine kinase which acts as an essential component of the MAP kinase signal transduction pathway. MAPK14 is one of the four p38 MAPKs which play an important role in the cascades of cellular responses evoked by extracellular stimuli such as pro-inflammatory cytokines or physical stress leading to direct activation of transcription factors. Accordingly, p38 MAPKs phosphorylate a broad range of proteins and it has been estimated that they may have approximately 200 to 300 substrates each. Some of the targets are downstream kinases which are activated through phosphorylation and further phosphorylate additional targets. RPS6KA5/MSK1 and RPS6KA4/MSK2 can directly phosphorylate and activate transcription factors such as CREB1, ATF1, the NF-kappa-B isoform RELA/NFKB3, STAT1 and STAT3, but can also phosphorylate histone H3 and the nucleosomal protein HMGN1. RPS6KA5/MSK1 and RPS6KA4/MSK2 play important roles in the rapid induction of immediate-early genes in response to stress or mitogenic stimuli, either by inducing chromatin remodeling or by recruiting the transcription machinery. On the other hand, two other kinase targets, MAPKAPK2/MK2 and MAPKAPK3/MK3, participate in the control of gene expression mostly at the post-transcriptional level, by phosphorylating ZFP36 (tristetraprolin) and ELAVL1, and by regulating EEF2K, which is important for the elongation of mRNA during translation. MKNK1/MNK1 and MKNK2/MNK2, two other kinases activated by p38 MAPKs, regulate protein synthesis by phosphorylating the initiation factor EIF4E2. MAPK14 also interacts with casein kinase II, leading to its activation through autophosphorylation and further phosphorylation of TP53/p53. In the cytoplasm, the p38 MAPK pathway is an important regulator of protein turnover. For example, CFLAR is an inhibitor of TNF-induced apoptosis whose proteasome-mediated degradation is regulated by p38 MAPK phosphorylation. In a similar way, MAPK14 phosphorylates the ubiquitin ligase SIAH2, regulating its activity towards EGLN3. MAPK14 may also inhibit the lysosomal degradation pathway of autophagy by interfering with the intracellular trafficking of the transmembrane protein ATG9. Another function of MAPK14 is to regulate the endocytosis of membrane receptors by different mechanisms that impinge on the small GTPase RAB5A. In addition, clathrin-mediated EGFR internalization induced by inflammatory cytokines and UV irradiation depends on MAPK14-mediated phosphorylation of EGFR itself as well as of RAB5A effectors. Ectodomain shedding of transmembrane proteins is regulated by p38 MAPKs as well. In response to inflammatory stimuli, p38 MAPKs phosphorylate the membrane-associated metalloprotease ADAM17. Such phosphorylation is required for ADAM17-mediated ectodomain shedding of TGF-alpha family ligands, which results in the activation of EGFR signaling and cell proliferation. Another p38 MAPK substrate is FGFR1. FGFR1 can be translocated from the extracellular space into the cytosol and nucleus of target cells, and regulates processes such as rRNA synthesis and cell growth. FGFR1 translocation requires p38 MAPK activation. In the nucleus, many transcription factors are phosphorylated and activated by p38 MAPKs in response to different stimuli. Classical examples include ATF1, ATF2, ATF6, ELK1, PTPRH, DDIT3, TP53/p53 and MEF2C and MEF2A. The p38 MAPKs are emerging as important modulators of gene expression by regulating chromatin modifiers and remodelers. The promoters of several genes involved in the inflammatory response, such as IL6, IL8 and IL12B, display a p38 MAPK-dependent enrichment of histone H3 phosphorylation on 'Ser-10' (H3S10ph) in LPS-stimulated myeloid cells. This phosphorylation enhances the accessibility of the cryptic NF-kappa-B-binding sites marking promoters for increased NF-kappa-B recruitment. Phosphorylates CDC25B and CDC25C which is required for binding to 14-3-3 proteins and leads to initiation of a G2 delay after ultraviolet radiation. Phosphorylates TIAR following DNA damage, releasing TIAR from GADD45A mRNA and preventing mRNA degradation. The p38 MAPKs may also have kinase-independent roles, which are thought to be due to the binding to targets in the absence of phosphorylation. Protein O-Glc-N-acylation catalyzed by the OGT is regulated by MAPK14, and, although OGT does not seem to be phosphorylated by MAPK14, their interaction increases upon MAPK14 activation induced by glucose deprivation. This interaction may regulate OGT activity by recruiting it to specific targets such as neurofilament H, stimulating its O-Glc-N-acylation. Required in mid-fetal development for the growth of embryo-derived blood vessels in the labyrinth layer of the placenta. Also plays an essential role in developmental and stress-induced erythropoiesis, through regulation of EPO gene expression. Phosphorylates S100A9 at 'Thr-113'. The polypeptide is Mitogen-activated protein kinase 14 (Pan troglodytes (Chimpanzee)).